Reading from the N-terminus, the 304-residue chain is Acetaldehyde dehydrogenase 2 (304 aa).

Cys-131 serves as the catalytic Acyl-thioester intermediate. NAD(+) contacts are provided by residues Ser-162 to Asn-170 and Asn-273.

Belongs to the acetaldehyde dehydrogenase family.

The enzyme catalyses acetaldehyde + NAD(+) + CoA = acetyl-CoA + NADH + H(+). The sequence is that of Acetaldehyde dehydrogenase 2 from Dechloromonas aromatica (strain RCB).